A 317-amino-acid chain; its full sequence is MKVLWAALLVTFLAGCQAKVEQVVETEPEPELRQQAEWQSGQRWELALGRFWDYLRWVQTLSEQVQEELLSSQVTQELTALMDETMKELKAYKSELEEQLTPVAEETRARLSKELQAAQARLGADMEDVRGRLVQYRGEVQAMLGQSTEELRARLASHLRKLRKRLLRDADDLQKRLAVYQAGAREGAERGVSAIRERLGPLVEQGRVRAATVGSVAGKPLQERAQAWGERLRARMEEMGSRTRDRLDEVKEQVAEVRAKLEEQAQQIRLQAEAFQARLKSWFEPLVEDMQRQWAGLVEKVQAAVGTSAAPVPSDNH.

A signal peptide spans 1–18 (MKVLWAALLVTFLAGCQA). 8 tandem repeats follow at residues 80–101 (ALMDETMKELKAYKSELEEQLT), 102–123 (PVAEETRARLSKELQAAQARLG), 124–145 (ADMEDVRGRLVQYRGEVQAMLG), 146–167 (QSTEELRARLASHLRKLRKRLL), 168–189 (RDADDLQKRLAVYQAGAREGAE), 190–211 (RGVSAIRERLGPLVEQGRVRAA), 212–233 (TVGSVAGKPLQERAQAWGERLR), and 234–255 (ARMEEMGSRTRDRLDEVKEQVA). The 8 X 22 AA approximate tandem repeats stretch occupies residues 80–255 (ALMDETMKEL…RLDEVKEQVA (176 aa)). Met143 is modified (methionine sulfoxide). Ser147 is subject to Phosphoserine. Positions 158 to 168 (HLRKLRKRLLR) are LDL and other lipoprotein receptors binding. 162-165 (LRKR) lines the heparin pocket. Positions 210 to 290 (AATVGSVAGK…SWFEPLVEDM (81 aa)) are lipid-binding and lipoprotein association. Residue 229–236 (GERLRARM) coordinates heparin. The segment at 266-317 (QQIRLQAEAFQARLKSWFEPLVEDMQRQWAGLVEKVQAAVGTSAAPVPSDNH) is homooligomerization. Positions 278 to 290 (RLKSWFEPLVEDM) are specificity for association with VLDL.

It belongs to the apolipoprotein A1/A4/E family. Homotetramer. May interact with ABCA1; functionally associated with ABCA1 in the biogenesis of HDLs. May interact with APP/A4 amyloid-beta peptide; the interaction is extremely stable in vitro but its physiological significance is unclear. May interact with MAPT. May interact with MAP2. In the cerebrospinal fluid, interacts with secreted SORL1. Interacts with PMEL; this allows the loading of PMEL luminal fragment on ILVs to induce fibril nucleation. In terms of processing, APOE exists as multiple glycosylated and sialylated glycoforms within cells and in plasma. The extent of glycosylation and sialylation are tissue and context specific. Glycated in plasma VLDL. Post-translationally, phosphorylated by FAM20C in the extracellular medium.

It is found in the secreted. Its subcellular location is the extracellular space. The protein resides in the extracellular matrix. The protein localises to the extracellular vesicle. It localises to the endosome. It is found in the multivesicular body. Functionally, APOE is an apolipoprotein, a protein associating with lipid particles, that mainly functions in lipoprotein-mediated lipid transport between organs via the plasma and interstitial fluids. APOE is a core component of plasma lipoproteins and is involved in their production, conversion and clearance. Apolipoproteins are amphipathic molecules that interact both with lipids of the lipoprotein particle core and the aqueous environment of the plasma. As such, APOE associates with chylomicrons, chylomicron remnants, very low density lipoproteins (VLDL) and intermediate density lipoproteins (IDL) but shows a preferential binding to high-density lipoproteins (HDL). It also binds a wide range of cellular receptors including the LDL receptor/LDLR, the LDL receptor-related proteins LRP1, LRP2 and LRP8 and the very low-density lipoprotein receptor/VLDLR that mediate the cellular uptake of the APOE-containing lipoprotein particles. Finally, APOE also has a heparin-binding activity and binds heparan-sulfate proteoglycans on the surface of cells, a property that supports the capture and the receptor-mediated uptake of APOE-containing lipoproteins by cells. A main function of APOE is to mediate lipoprotein clearance through the uptake of chylomicrons, VLDLs, and HDLs by hepatocytes. APOE is also involved in the biosynthesis by the liver of VLDLs as well as their uptake by peripheral tissues ensuring the delivery of triglycerides and energy storage in muscle, heart and adipose tissues. By participating in the lipoprotein-mediated distribution of lipids among tissues, APOE plays a critical role in plasma and tissues lipid homeostasis. APOE is also involved in two steps of reverse cholesterol transport, the HDLs-mediated transport of cholesterol from peripheral tissues to the liver, and thereby plays an important role in cholesterol homeostasis. First, it is functionally associated with ABCA1 in the biogenesis of HDLs in tissues. Second, it is enriched in circulating HDLs and mediates their uptake by hepatocytes. APOE also plays an important role in lipid transport in the central nervous system, regulating neuron survival and sprouting. The polypeptide is Apolipoprotein E (APOE) (Pongo pygmaeus (Bornean orangutan)).